The primary structure comprises 170 residues: Phosphopantetheine adenylyltransferase (170 aa).

Residue S14 coordinates substrate. Residues 14–15 (SF) and H22 each bind ATP. Substrate contacts are provided by K46, L79, and R93. Residues 94–96 (GIR), E104, and 129–135 (IAEVSST) each bind ATP.

It belongs to the bacterial CoaD family. In terms of assembly, homohexamer. The cofactor is Mg(2+).

The protein resides in the cytoplasm. It catalyses the reaction (R)-4'-phosphopantetheine + ATP + H(+) = 3'-dephospho-CoA + diphosphate. It functions in the pathway cofactor biosynthesis; coenzyme A biosynthesis; CoA from (R)-pantothenate: step 4/5. Reversibly transfers an adenylyl group from ATP to 4'-phosphopantetheine, yielding dephospho-CoA (dPCoA) and pyrophosphate. This is Phosphopantetheine adenylyltransferase from Neisseria meningitidis serogroup C (strain 053442).